We begin with the raw amino-acid sequence, 283 residues long: Plasma membrane ascorbate-dependent reductase CYBRD1 (283 aa).

The Cytoplasmic segment spans residues M1–K5. Residues S6–L30 traverse the membrane as a helical segment. The Cytochrome b561 domain maps to S13–T218. Over H31–F45 the chain is Extracellular. A helical transmembrane segment spans residues N46–Y67. Heme b contacts are provided by H48, R68, and K77. At R68–S76 the chain is on the cytoplasmic side. The L-ascorbate site is built by K77 and K81. Residues K77–F103 traverse the membrane as a helical segment. A heme b-binding site is contributed by H84. Topologically, residues D104–S116 are extracellular. H106 is a binding site for Fe(3+). Residues N113 to S116 and H118 contribute to the heme b site. Residues L117 to L142 traverse the membrane as a helical segment. The Cytoplasmic portion of the chain corresponds to P143–L149. L-ascorbate is bound at residue R150. A helical transmembrane segment spans residues R150–T177. The heme b site is built by H157 and E178. Residues E178–E195 are Extracellular-facing. Residues A196–P220 traverse the membrane as a helical segment. The Cytoplasmic portion of the chain corresponds to A221 to M283. K223 is a binding site for heme b. The tract at residues N234–N263 is disordered. The segment covering P235–S253 has biased composition (polar residues). Residues N254–N263 show a composition bias toward basic and acidic residues.

As to quaternary structure, homodimer. Heme b serves as cofactor.

It is found in the cell membrane. It localises to the apical cell membrane. The catalysed reaction is Fe(3+)(out) + L-ascorbate(in) = monodehydro-L-ascorbate radical(in) + Fe(2+)(out) + H(+). It catalyses the reaction Cu(2+)(out) + L-ascorbate(in) = Cu(+)(out) + monodehydro-L-ascorbate radical(in) + H(+). The enzyme catalyses monodehydro-L-ascorbate radical(out) + L-ascorbate(in) = monodehydro-L-ascorbate radical(in) + L-ascorbate(out). Plasma membrane reductase that uses cytoplasmic ascorbate as an electron donor to reduce extracellular Fe(3+) into Fe(2+). It is also able to reduce extracellular monodehydro-L-ascorbate and may be involved in extracellular ascorbate regeneration. May also function as a cupric transmembrane reductase. This is Plasma membrane ascorbate-dependent reductase CYBRD1 (cybrd1) from Xenopus tropicalis (Western clawed frog).